The primary structure comprises 248 residues: MKLSNNQIRKIKRRLEHTQASAKRRSKDFNLDFNYIKNILDQKVCAYSGEPFDNRIEGEKLSLERFDNNVGYIKGNVIAVKKKYNTFRSDYTLEELIEKRDLFALRIGRSSAKKVHKLNLDEKKWAKIKKTYNQIKAIQKKRENRIEHISQLSKSKQTSDIKLRIIALKARIDGSRIAEGAEVVKLNVLLKGSDWKIVKKLSEAEMQYDMCDKIIQGVERYQNLSFIDKLKLKRGYPLNCSIFKLIRG.

This is an uncharacterized protein from Escherichia coli (Bacteriophage T4).